The following is a 376-amino-acid chain: WW domain-binding protein 4 (376 aa).

A Matrin-type zinc finger spans residues 11-42; that stretch reads KFCDYCKCWIADNRPSVEFHERGKNHKENVAK. Residues 94-107 show a composition bias toward low complexity; sequence ITPVTSTIPPTSTS. Disordered stretches follow at residues 94 to 128, 189 to 335, and 356 to 376; these read ITPV…KGRW, SRWE…EPKV, and FKKR…GDDQ. WW domains are found at residues 122 to 155 and 163 to 196; these read DPSK…KPEG and TAVK…KPDD. The segment covering 189 to 198 has biased composition (basic and acidic residues); the sequence is SRWEKPDDFI. A compositionally biased stretch (polar residues) spans 203–215; sequence DLPSSKVNENSLG. Composition is skewed to basic and acidic residues over residues 218-229 and 243-257; these read DESKSSDSHSDS and ETEK…KNKN. Residues Ser220, Ser227, and Ser229 each carry the phosphoserine modification. Ser262 carries the post-translational modification Phosphoserine. Positions 298–309 are enriched in basic and acidic residues; sequence QEIKQEVESHEE. Polar residues predominate over residues 316–326; that stretch reads STENEYVSTSE. The interaction with SNRNP200 stretch occupies residues 357 to 375; that stretch reads KKRRTENGKSRNLRQRGDD. A compositionally biased stretch (basic and acidic residues) spans 361–376; sequence TENGKSRNLRQRGDDQ.

Component of the spliceosome B complex. Associated with U2 snRNPs. Binds splicing factors SNRPB, SNRPC and SF1. Interacts via the WW domains with the Pro-rich domains of KHDRBS1/SAM68. Interacts via the WW domains with the Pro-rich domains of WBP11. Interacts with SNRNP200.

The protein localises to the nucleus. Its subcellular location is the nucleus speckle. In terms of biological role, involved in pre-mRNA splicing as a component of the spliceosome. May play a role in cross-intron bridging of U1 and U2 snRNPs in the mammalian A complex. The chain is WW domain-binding protein 4 (WBP4) from Homo sapiens (Human).